Reading from the N-terminus, the 161-residue chain is ATP synthase subunit b (161 aa).

The helical transmembrane segment at 2 to 22 (VIEWGTALYQLLAFAVLLLIL) threads the bilayer.

This sequence belongs to the ATPase B chain family. As to quaternary structure, F-type ATPases have 2 components, F(1) - the catalytic core - and F(0) - the membrane proton channel. F(1) has five subunits: alpha(3), beta(3), gamma(1), delta(1), epsilon(1). F(0) has three main subunits: a(1), b(2) and c(10-14). The alpha and beta chains form an alternating ring which encloses part of the gamma chain. F(1) is attached to F(0) by a central stalk formed by the gamma and epsilon chains, while a peripheral stalk is formed by the delta and b chains.

The protein resides in the cell membrane. Functionally, f(1)F(0) ATP synthase produces ATP from ADP in the presence of a proton or sodium gradient. F-type ATPases consist of two structural domains, F(1) containing the extramembraneous catalytic core and F(0) containing the membrane proton channel, linked together by a central stalk and a peripheral stalk. During catalysis, ATP synthesis in the catalytic domain of F(1) is coupled via a rotary mechanism of the central stalk subunits to proton translocation. Component of the F(0) channel, it forms part of the peripheral stalk, linking F(1) to F(0). The protein is ATP synthase subunit b of Shouchella clausii (strain KSM-K16) (Alkalihalobacillus clausii).